Here is a 301-residue protein sequence, read N- to C-terminus: Aquaporin-10 (301 aa).

Topologically, residues 1 to 22 (MVFTQAPAEIMGHLRIRSLLAR) are cytoplasmic. A helical membrane pass occupies residues 23–41 (QCLAEFLGVFVLMLLTQGA). Residues 42–55 (VAQAVTSGETKGNF) are Extracellular-facing. A helical transmembrane segment spans residues 56 to 75 (FTMFLAGSLAVTIAIYVGGN). At 76–77 (VS) the chain is on the cytoplasmic side. Positions 78–90 (GAHLNPAFSLAMC) form an intramembrane region, discontinuously helical. The NPA 1 motif lies at 82 to 84 (NPA). Topologically, residues 91-96 (IVGRLP) are cytoplasmic. A helical transmembrane segment spans residues 97 to 121 (WVKLPIYILVQLLSAFCASGATYVL). Topologically, residues 122 to 158 (YHDALQNYTGGNLTVTGPKETASIFATYPAPYLSLNN) are extracellular. 2 N-linked (GlcNAc...) asparagine glycosylation sites follow: Asn-128 and Asn-133. The helical transmembrane segment at 159 to 176 (GFLDQVLGTGMLIVGLLA) threads the bilayer. Residues 177–188 (ILDRRNKGVPAG) are Cytoplasmic-facing. The chain crosses the membrane as a helical span at residues 189 to 205 (LEPVVVGMLILALGLSM). Residues 206–208 (GAN) are Extracellular-facing. The discontinuously helical intramembrane region spans 209-223 (CGIPLNPARDLGPRL). Residues 214-216 (NPA) carry the NPA 2 motif. Residues 224 to 241 (FTYVAGWGPEVFSAGNGW) lie on the Extracellular side of the membrane. Residues 242 to 262 (WWVPVVAPLVGATVGTATYQL) form a helical membrane-spanning segment. The Cytoplasmic segment spans residues 263–301 (LVALHHPEGPEPAQDLVSAQHKASELETPASAQMLECKL).

It belongs to the MIP/aquaporin (TC 1.A.8) family. As to quaternary structure, homotetramer; each monomer provides an independent glycerol/water pore. Post-translationally, N-glycosylation at Asn-133 increases the stability of the protein but has no effect on its activity. Detected in epithelial cells on villi in the ileum, and also in stomach, jejunum, colon, rectum, white adipose tissue and placenta (at protein level). Expressed in duodenum and jejunum. Highest expression in absorptive epithelial cells at the tips of villi in the jejunum. Detected in subcutaneous adipose tissue.

The protein localises to the apical cell membrane. Its subcellular location is the cell membrane. It is found in the lipid droplet. The catalysed reaction is glycerol(in) = glycerol(out). It carries out the reaction H2O(in) = H2O(out). The enzyme catalyses urea(in) = urea(out). Its activity is regulated as follows. Glycerol transport is regulated by pH, with the porin being permeable to glycerol at pH 5.5 but not at pH 7.4. Water permeability, however, is not influenced by pH. In terms of biological role, aquaglyceroporins form homotetrameric transmembrane channels, with each monomer independently mediating glycerol and water transport across the plasma membrane along their osmotic gradient. Could also be permeable to urea. Among aquaglyceroporins, it exhibits a unique pH-gated glycerol transport activity, being more active at acidic pH. It most likely plays a central role in the efflux of glycerol formed during triglyceride hydrolysis in adipocytes and in glycerol uptake by enterocytes, as both processes occur and are stimulated at acidic pH. This is Aquaporin-10 from Homo sapiens (Human).